The following is a 1375-amino-acid chain: Capping protein, Arp2/3 and myosin-I linker protein 3 (1375 aa).

The interval 124-151 (IRRGNADTPEGPRDTSPNSETSTSTTHS) is disordered. Residues 138-151 (TSPNSETSTSTTHS) show a composition bias toward low complexity. LRR repeat units follow at residues 244-264 (SLEE…QKLA), 274-295 (VLHA…SLSQ), 303-323 (GLTK…QALG), 335-357 (SLRY…NALY), 365-386 (ALVH…GALL), 392-413 (HLTY…EAPP), 424-444 (TLSH…RALL), 455-475 (DLHL…ALQE), 482-501 (CIGS…LTLV), and 509-530 (SLKH…EEIL). Disordered stretches follow at residues 864-901 (RTLS…GTNI) and 969-1375 (KLRH…PGTD). Residues 981–997 (PRTTPPGPGRPSVPVPG) show a composition bias toward pro residues. Over residues 1007–1022 (RLDEGLEDFFSRRVMD) the composition is skewed to basic and acidic residues. The segment covering 1047 to 1062 (QKKRRRGLFHFRRPRS) has biased composition (basic residues). The segment covering 1078–1097 (LPPPPPPPPTQESPPSPDPP) has biased composition (pro residues). Residues 1098–1108 (SLGNNSSPCWS) are compositionally biased toward low complexity. A compositionally biased stretch (basic and acidic residues) spans 1219 to 1229 (RRAEATWHIAE). The span at 1233 to 1244 (ANHSCQSPSPAS) shows a compositional bias: polar residues. The segment covering 1272 to 1281 (PIGPRPPKPV) has biased composition (pro residues). A compositionally biased stretch (basic and acidic residues) spans 1348-1360 (QSCDKLEPDRRQP).

It belongs to the CARMIL family.

Its subcellular location is the cytoplasm. It is found in the cell membrane. The protein is Capping protein, Arp2/3 and myosin-I linker protein 3 (Carmil3) of Mus musculus (Mouse).